Consider the following 76-residue polypeptide: Acyl carrier protein (76 aa).

Residues 1–75 enclose the Carrier domain; the sequence is MIFEKIKDLI…DIVFYITKNT (75 aa). S35 is modified (O-(pantetheine 4'-phosphoryl)serine).

This sequence belongs to the acyl carrier protein (ACP) family. 4'-phosphopantetheine is transferred from CoA to a specific serine of apo-ACP by AcpS. This modification is essential for activity because fatty acids are bound in thioester linkage to the sulfhydryl of the prosthetic group.

The protein localises to the cytoplasm. It participates in lipid metabolism; fatty acid biosynthesis. Functionally, carrier of the growing fatty acid chain in fatty acid biosynthesis. This chain is Acyl carrier protein, found in Aster yellows witches'-broom phytoplasma (strain AYWB).